Consider the following 467-residue polypeptide: Glutamate--tRNA ligase (467 aa).

The 'HIGH' region motif lies at 9–19; sequence PSPTGYLHIGG. The short motif at 237–241 is the 'KMSKS' region element; it reads KLSKR. Lys-240 lines the ATP pocket.

This sequence belongs to the class-I aminoacyl-tRNA synthetase family. Glutamate--tRNA ligase type 1 subfamily. In terms of assembly, monomer.

It localises to the cytoplasm. It catalyses the reaction tRNA(Glu) + L-glutamate + ATP = L-glutamyl-tRNA(Glu) + AMP + diphosphate. Its function is as follows. Catalyzes the attachment of glutamate to tRNA(Glu) in a two-step reaction: glutamate is first activated by ATP to form Glu-AMP and then transferred to the acceptor end of tRNA(Glu). The protein is Glutamate--tRNA ligase of Xylella fastidiosa (strain 9a5c).